A 182-amino-acid polypeptide reads, in one-letter code: Large ribosomal subunit protein uL15 (182 aa).

The segment at Met-1 to Gly-52 is disordered. Residues Arg-21–Asn-35 show a composition bias toward gly residues.

Belongs to the universal ribosomal protein uL15 family. As to quaternary structure, part of the 50S ribosomal subunit.

Binds to the 23S rRNA. The protein is Large ribosomal subunit protein uL15 of Chlorobium phaeobacteroides (strain BS1).